A 539-amino-acid chain; its full sequence is 3-methylmercaptopropionyl-CoA ligase (539 aa).

Mg(2+) is bound at residue T185. Residues H231, G303, H324, A325, and S329 each coordinate ATP. E330 is a binding site for Mg(2+). Q359, D417, R432, and K523 together coordinate ATP.

This sequence belongs to the ATP-dependent AMP-binding enzyme family. In terms of assembly, homodimer. Requires Mg(2+) as cofactor.

It carries out the reaction 3-(methylsulfanyl)propanoate + ATP + CoA = 3-(methylsulfanyl)propanoyl-CoA + AMP + diphosphate. With respect to regulation, ADP acts as a competitive inhibitor and inhibits the ligase activity. In terms of biological role, involved in the assimilation of dimethylsulphoniopropionate (DMSP), an important compound in the fixation of carbon in marine phytoplankton. Catalyzes the ATP-dependent ligation of methylmercaptopropionate (MMPA) and CoA to yield methylmercaptopropionate-CoA (MMPA-CoA). The sequence is that of 3-methylmercaptopropionyl-CoA ligase from Ruegeria lacuscaerulensis (strain DSM 11314 / KCTC 2953 / ITI-1157) (Silicibacter lacuscaerulensis).